A 336-amino-acid chain; its full sequence is 3-isopropylmalate dehydrogenase (336 aa).

Substrate contacts are provided by Arg-87, Arg-97, Arg-121, and Asp-211. Mg(2+) contacts are provided by Asp-211, Asp-235, and Asp-239. 271-283 (GSAPDIAGQGIAD) lines the NAD(+) pocket.

It belongs to the isocitrate and isopropylmalate dehydrogenases family. LeuB type 2 subfamily. Homodimer. Mg(2+) is required as a cofactor. It depends on Mn(2+) as a cofactor.

The protein localises to the cytoplasm. It catalyses the reaction (2R,3S)-3-isopropylmalate + NAD(+) = 4-methyl-2-oxopentanoate + CO2 + NADH. Its pathway is amino-acid biosynthesis; L-leucine biosynthesis; L-leucine from 3-methyl-2-oxobutanoate: step 3/4. Catalyzes the oxidation of 3-carboxy-2-hydroxy-4-methylpentanoate (3-isopropylmalate) to 3-carboxy-4-methyl-2-oxopentanoate. The product decarboxylates to 4-methyl-2 oxopentanoate. This Mycobacterium sp. (strain JLS) protein is 3-isopropylmalate dehydrogenase.